An 89-amino-acid chain; its full sequence is Small ribosomal subunit protein uS15 (89 aa).

It belongs to the universal ribosomal protein uS15 family. As to quaternary structure, part of the 30S ribosomal subunit. Forms a bridge to the 50S subunit in the 70S ribosome, contacting the 23S rRNA.

Its function is as follows. One of the primary rRNA binding proteins, it binds directly to 16S rRNA where it helps nucleate assembly of the platform of the 30S subunit by binding and bridging several RNA helices of the 16S rRNA. Functionally, forms an intersubunit bridge (bridge B4) with the 23S rRNA of the 50S subunit in the ribosome. This chain is Small ribosomal subunit protein uS15, found in Bacteroides thetaiotaomicron (strain ATCC 29148 / DSM 2079 / JCM 5827 / CCUG 10774 / NCTC 10582 / VPI-5482 / E50).